The chain runs to 152 residues: Small ribosomal subunit protein bS16 (152 aa).

The segment covering 118-130 (AEKHKAKASEKKA) has biased composition (basic and acidic residues). Positions 118 to 152 (AEKHKAKASEKKAAAAASADEAGSAAADDAEGSES) are disordered. The segment covering 131–144 (AAAASADEAGSAAA) has biased composition (low complexity).

This sequence belongs to the bacterial ribosomal protein bS16 family.

The sequence is that of Small ribosomal subunit protein bS16 from Beutenbergia cavernae (strain ATCC BAA-8 / DSM 12333 / CCUG 43141 / JCM 11478 / NBRC 16432 / NCIMB 13614 / HKI 0122).